The following is a 323-amino-acid chain: 4-hydroxy-3-methylbut-2-enyl diphosphate reductase (323 aa).

Residue cysteine 21 coordinates [4Fe-4S] cluster. (2E)-4-hydroxy-3-methylbut-2-enyl diphosphate-binding residues include histidine 50 and histidine 83. Residues histidine 50 and histidine 83 each contribute to the dimethylallyl diphosphate site. Isopentenyl diphosphate contacts are provided by histidine 50 and histidine 83. A [4Fe-4S] cluster-binding site is contributed by cysteine 105. (2E)-4-hydroxy-3-methylbut-2-enyl diphosphate is bound at residue histidine 133. Histidine 133 is a dimethylallyl diphosphate binding site. Histidine 133 contacts isopentenyl diphosphate. Catalysis depends on glutamate 135, which acts as the Proton donor. (2E)-4-hydroxy-3-methylbut-2-enyl diphosphate is bound at residue threonine 173. A [4Fe-4S] cluster-binding site is contributed by cysteine 203. 4 residues coordinate (2E)-4-hydroxy-3-methylbut-2-enyl diphosphate: serine 231, serine 232, asparagine 233, and serine 276. Dimethylallyl diphosphate contacts are provided by serine 231, serine 232, asparagine 233, and serine 276. Isopentenyl diphosphate-binding residues include serine 231, serine 232, asparagine 233, and serine 276.

The protein belongs to the IspH family. The cofactor is [4Fe-4S] cluster.

The enzyme catalyses isopentenyl diphosphate + 2 oxidized [2Fe-2S]-[ferredoxin] + H2O = (2E)-4-hydroxy-3-methylbut-2-enyl diphosphate + 2 reduced [2Fe-2S]-[ferredoxin] + 2 H(+). It carries out the reaction dimethylallyl diphosphate + 2 oxidized [2Fe-2S]-[ferredoxin] + H2O = (2E)-4-hydroxy-3-methylbut-2-enyl diphosphate + 2 reduced [2Fe-2S]-[ferredoxin] + 2 H(+). It participates in isoprenoid biosynthesis; dimethylallyl diphosphate biosynthesis; dimethylallyl diphosphate from (2E)-4-hydroxy-3-methylbutenyl diphosphate: step 1/1. Its pathway is isoprenoid biosynthesis; isopentenyl diphosphate biosynthesis via DXP pathway; isopentenyl diphosphate from 1-deoxy-D-xylulose 5-phosphate: step 6/6. Functionally, catalyzes the conversion of 1-hydroxy-2-methyl-2-(E)-butenyl 4-diphosphate (HMBPP) into a mixture of isopentenyl diphosphate (IPP) and dimethylallyl diphosphate (DMAPP). Acts in the terminal step of the DOXP/MEP pathway for isoprenoid precursor biosynthesis. This is 4-hydroxy-3-methylbut-2-enyl diphosphate reductase from Cutibacterium acnes (strain DSM 16379 / KPA171202) (Propionibacterium acnes).